The following is a 477-amino-acid chain: Adenylyl cyclase-associated protein 2 (477 aa).

A2 bears the N-acetylalanine mark. Disordered stretches follow at residues S224–S262 and I274–V324. Residues G231–F248 show a composition bias toward pro residues. Over residues R300–P318 the composition is skewed to low complexity. A phosphoserine mark is found at S301 and S309. One can recognise a C-CAP/cofactor C-like domain in the interval P318–I455.

The protein belongs to the CAP family. Found at relatively high levels in testes, at moderate levels in brain, heart and skeletal muscle, at lower levels in lung, skin, kidney and small intestine, and is undetectable in liver or spleen.

It localises to the cell membrane. In terms of biological role, involved in the regulation of actin polymerization. The polypeptide is Adenylyl cyclase-associated protein 2 (Cap2) (Rattus norvegicus (Rat)).